Consider the following 498-residue polypeptide: ATP synthase subunit beta, chloroplastic (498 aa).

172 to 179 (GGAGVGKT) is a binding site for ATP.

Belongs to the ATPase alpha/beta chains family. As to quaternary structure, F-type ATPases have 2 components, CF(1) - the catalytic core - and CF(0) - the membrane proton channel. CF(1) has five subunits: alpha(3), beta(3), gamma(1), delta(1), epsilon(1). CF(0) has four main subunits: a(1), b(1), b'(1) and c(9-12).

The protein localises to the plastid. It is found in the chloroplast thylakoid membrane. It carries out the reaction ATP + H2O + 4 H(+)(in) = ADP + phosphate + 5 H(+)(out). Its function is as follows. Produces ATP from ADP in the presence of a proton gradient across the membrane. The catalytic sites are hosted primarily by the beta subunits. The sequence is that of ATP synthase subunit beta, chloroplastic from Populus tremuloides (Quaking aspen).